The chain runs to 205 residues: MAYEQEVWVPVTGLGKKVMAGEFASFDEILASGQPIKEAGIVDAMLPDLVDEVLCIDMMQRMTDSGRRIKFRAVVVIGNKNGYVGFGQGRDVQVGTAIKKAITNAKLNIVKVRRGCGSWECGCGMKHSVPMEVTGKAGSVAVTLKPAPKGIGLVTGDVGKKVLTLAGIQDVWVNTSGNTRTTLNFAKATYNALRETNLIRIGGRK.

One can recognise an S5 DRBM domain in the interval 49 to 112 (LVDEVLCIDM…TNAKLNIVKV (64 aa)).

Belongs to the universal ribosomal protein uS5 family. Part of the 30S ribosomal subunit. Contacts protein S4.

Its function is as follows. With S4 and S12 plays an important role in translational accuracy. The protein is Small ribosomal subunit protein uS5 of Methanocorpusculum labreanum (strain ATCC 43576 / DSM 4855 / Z).